The primary structure comprises 120 residues: Flagellar protein FliT (120 aa).

The tract at residues 1–50 (MERHQHLLSEYQQILTLSEQMLVLATEGNWDALVDLEMTYLKAVESTANI) is required for homodimerization. The segment at 60–98 (LQDLLREKLRAILDNEIEIKRLLQLRLDRLSDLVGQSTK) is fliD binding.

This sequence belongs to the FliT family. As to quaternary structure, homodimer. Interacts with FliD and FlhC.

The protein localises to the cytoplasm. Its subcellular location is the cytosol. In terms of biological role, dual-function protein that regulates the transcription of class 2 flagellar operons and that also acts as an export chaperone for the filament-capping protein FliD. As a transcriptional regulator, acts as an anti-FlhDC factor; it directly binds FlhC, thus inhibiting the binding of the FlhC/FlhD complex to class 2 promoters, resulting in decreased expression of class 2 flagellar operons. As a chaperone, effects FliD transition to the membrane by preventing its premature polymerization, and by directing it to the export apparatus. This Yersinia enterocolitica serotype O:8 / biotype 1B (strain NCTC 13174 / 8081) protein is Flagellar protein FliT.